Here is a 441-residue protein sequence, read N- to C-terminus: ATP-dependent RNA helicase sub2 (441 aa).

A compositionally biased stretch (low complexity) spans D19–A29. Residues D19–G43 form a disordered region. Residues T58–Q86 carry the Q motif motif. Residues I89–V264 form the Helicase ATP-binding domain. Residue A102–T109 participates in ATP binding. Residues D211–D214 carry the DEAD box motif. A Helicase C-terminal domain is found at G276–S437.

Belongs to the DEAD box helicase family. DECD subfamily.

The protein resides in the nucleus. The enzyme catalyses ATP + H2O = ADP + phosphate + H(+). Its function is as follows. ATP-binding RNA helicase involved in transcription elongation and required for the export of mRNA out of the nucleus. SUB2 also plays a role in pre-mRNA splicing and spliceosome assembly. May be involved in rDNA and telomeric silencing, and maintenance of genome integrity. In Neosartorya fischeri (strain ATCC 1020 / DSM 3700 / CBS 544.65 / FGSC A1164 / JCM 1740 / NRRL 181 / WB 181) (Aspergillus fischerianus), this protein is ATP-dependent RNA helicase sub2 (sub2).